We begin with the raw amino-acid sequence, 492 residues long: Cytochrome P450 26A1 (492 aa).

Residue cysteine 438 coordinates heme.

Belongs to the cytochrome P450 family. Heme serves as cofactor.

The protein resides in the endoplasmic reticulum membrane. Its subcellular location is the microsome membrane. The enzyme catalyses all-trans-retinoate + reduced [NADPH--hemoprotein reductase] + O2 = all-trans-(4S)-hydroxyretinoate + oxidized [NADPH--hemoprotein reductase] + H2O + H(+). A cytochrome P450 monooxygenase involved in the metabolism of all-trans retinoic acid (atRA), a signaling molecule that binds to retinoic acid receptors and regulates gene transcription. Mechanistically, uses molecular oxygen inserting one oxygen atom into a substrate, and reducing the second into a water molecule, with two electrons provided by NADPH via cytochrome P450 reductase (CPR; NADPH-ferrihemoprotein reductase). Catalyzes the hydroxylation of carbon hydrogen bonds of atRA primarily at C-4. Has no activity toward 9-cis and 13-cis retinoic acid stereoisomers. May play a role in the oxidative metabolism of xenobiotics such as tazarotenic acid. The sequence is that of Cytochrome P450 26A1 (cyp26a1) from Danio rerio (Zebrafish).